A 726-amino-acid polypeptide reads, in one-letter code: Tripartite terminase subunit 1 (726 aa).

The segment at 189–217 adopts a C3H1-type zinc-finger fold; the sequence is CMKCYEELTLTPNQGKSLRRRLHGKFCNH. 626–633 contributes to the ATP binding site; that stretch reads YNDVFGKR.

The protein belongs to the herpesviridae TRM1 protein family. Associates with TRM2 and TRM3 to form the tripartite terminase complex. Interacts with portal protein.

The protein localises to the host nucleus. Component of the molecular motor that translocates viral genomic DNA in empty capsid during DNA packaging. Forms a tripartite terminase complex together with TRM2 and TRM3 in the host cytoplasm. Once the complex reaches the host nucleus, it interacts with the capsid portal vertex. This portal forms a ring in which genomic DNA is translocated into the capsid. TRM1 carries an endonuclease activity that plays an important role for the cleavage of concatemeric viral DNA into unit length genomes. This is Tripartite terminase subunit 1 from Homo sapiens (Human).